A 602-amino-acid polypeptide reads, in one-letter code: PEX5-related protein (602 aa).

2 disordered regions span residues 94-140 (VSQT…PETS) and 167-206 (HLMAERKSCSSRAGSKELLWSSEHRSQPELSTGKSALNSE). Phosphoserine occurs at positions 181, 229, 233, and 237. 3 TPR repeats span residues 302 to 335 (WPGAFEEGLKRLKEGDLPVTILFMEAAILQDPGN), 336 to 369 (AEAWQFLGITQAENENEQAAIVALQRCLELQPNN), and 371 to 403 (KALMALAVSYTNTSHQQDACEALKNWIKQNPKY). A phosphoserine mark is found at Ser421 and Ser423. 3 TPR repeats span residues 450–483 (PDLQTGLGVLFHLSGEFNRAIDAFNAALTVRPED), 485–517 (SLWNRLGATLANGDRSEEAVEAYTRALEIQPGF), and 519–551 (RSRYNLGISCINLGAYREAVSNFLTALSLQRKS).

Belongs to the peroxisomal targeting signal receptor family. As to quaternary structure, forms an obligate 4:4 complex with HCN2. Interacts with RAB8B. Interacts with HCN3. Interacts with HCN4 with a 4:4 HCN4:PEX5L stoichiometry; reduces the effects of cAMP on the voltage-dependence and rate of activation of HCN4. As to expression, brain specific.

It localises to the cytoplasm. It is found in the membrane. Its function is as follows. Accessory subunit of hyperpolarization-activated cyclic nucleotide-gated (HCN) channels, regulating their cell-surface expression and cyclic nucleotide dependence. This is PEX5-related protein (Pex5l) from Rattus norvegicus (Rat).